Here is a 1538-residue protein sequence, read N- to C-terminus: Lhr helicase/uracil glycosylase (1538 aa).

Positions 1–897 (MADNPDPSSL…ERRASVLSLD (897 aa)) are lhr-Core. ATP contacts are provided by glutamine 34, lysine 57, threonine 58, aspartate 179, glutamate 180, isoleucine 398, arginine 415, and histidine 418. Positions 38–235 (WHVAARSEHA…FLGGDRPVTV (198 aa)) constitute a Helicase ATP-binding domain. Positions 179–182 (DEVH) match the DEVH box motif. The Helicase C-terminal domain maps to 284 to 462 (GILDEVLRHR…NLTPPHNPLD (179 aa)). A beta-sheet bundle region spans residues 463–552 (VLAQQTVAAA…VTSGGTIPDR (90 aa)). A WH domain region spans residues 553-623 (GMYSVLLPEG…SARLPFWRGE (71 aa)). The interval 624-897 (GNGRPAELGE…ERRASVLSLD (274 aa)) is domain 4. The tract at residues 898–1538 (SELLRNLLGQ…SSSPQGLDWG (641 aa)) is lhr-CTD. Positions 1287–1312 (SNARTSTRRSHRARRGRPVYAQPVSP) are disordered. Over residues 1292–1303 (STRRSHRARRGR) the composition is skewed to basic residues.

Belongs to the Lhr helicase family. In terms of assembly, homooligomerizes, probably a homotetramer. It depends on Ca(2+) as a cofactor. Requires Uracil deglycosylase activity does not require a cofactor. as cofactor.

The catalysed reaction is Couples ATP hydrolysis with the unwinding of duplex DNA by translocating in the 3'-5' direction.. It catalyses the reaction ATP + H2O = ADP + phosphate + H(+). It carries out the reaction Hydrolyzes single-stranded DNA or mismatched double-stranded DNA and polynucleotides, releasing free uracil.. Its function is as follows. A 3'-5' helicase probably involved in DNA repair. Translocates in an ATP-dependent manner 3'-to-5' on single-stranded (ss)DNA, unwinding any encountered duplex nucleic acid. An RNA:DNA hybrid with a 3'-ssDNA loading strand is a 4.5-fold better helicase substrate than 3'-tailed double-stranded (ds)DNA; substrates where the helicase loads on a 3'-ssRNA tail (DNA:RNA and RNA:RNA) are not unwound. Unlike its M.smegmatis counterpart, the ATPase is not ssDNA-dependent. Forms a clamp around the ssDNA loading strand. Excises uracil residues from DNA; forked DNA with a dU residue is the best substrate followed by ssDNA. Inactive on dsDNA with a dU residue or DNA with an 8-oxoguanine residue. Uracil residues in DNA can arise as a result of misincorporation of dUMP residues by DNA polymerase or due to deamination of cytosine. The protein is Lhr helicase/uracil glycosylase of Escherichia coli (strain K12).